The sequence spans 534 residues: H(+)/hexose cotransporter 1 (534 aa).

Residues 1 to 21 are Cytoplasmic-facing; sequence MAGGGVVVVSGRGLSTGDYRG. Residues 22 to 42 traverse the membrane as a helical segment; the sequence is GLTVYVVMVAFMAACGGLLLG. Residues 43 to 87 lie on the Extracellular side of the membrane; that stretch reads YDNGVTGGVVSLEAFEKKFFPDVWAKKQEVHEDSPYCTYDNAKLQ. A helical membrane pass occupies residues 88 to 108; the sequence is LFVSSLFLAGLVSCLFASWIT. The Cytoplasmic segment spans residues 109–114; that stretch reads RNWGRK. Residues 115–135 form a helical membrane-spanning segment; sequence VTMGIGGAFFVAGGLVNAFAQ. Residues 136 to 144 lie on the Extracellular side of the membrane; the sequence is DMAMLIVGR. The chain crosses the membrane as a helical span at residues 145-165; that stretch reads VLLGFGVGLGSQVVPQYLSEV. The Cytoplasmic portion of the chain corresponds to 166-173; it reads APFSHRGM. The helical transmembrane segment at 174 to 194 threads the bilayer; that stretch reads LNIGYQLFVTIGILIAGLVNY. Residues 195–204 are Extracellular-facing; that stretch reads AVRDWENGWR. The helical transmembrane segment at 205–225 threads the bilayer; that stretch reads LSLGPAAAPGAILFLGSLVLP. At 226–299 the chain is on the cytoplasmic side; it reads ESPNFLVEKG…TSFVIQFFQQ (74 aa). The helical transmembrane segment at 300–322 threads the bilayer; the sequence is FTGINAIIFYVPVLFSSLGSANS. Topologically, residues 323-328 are extracellular; sequence AALLNT. A helical transmembrane segment spans residues 329–349; sequence VVVGAVNVGSTLIAVMFSDKF. Over 350 to 352 the chain is Cytoplasmic; sequence GRR. Residues 353-373 form a helical membrane-spanning segment; the sequence is FLLIEGGIQCCLAMLTTGVVL. Residues 374–387 are Extracellular-facing; that stretch reads AIEFAKYGTDPLPK. Residues 388 to 408 traverse the membrane as a helical segment; sequence AVASGILAVICIFISGFAWSW. Over 409–433 the chain is Cytoplasmic; that stretch reads GPMGWLIPSEIFTLETRPAGTAVAV. A helical membrane pass occupies residues 434–454; the sequence is VGNFLFSFVIGQAFVSMLCAM. At 455–456 the chain is on the extracellular side; sequence EY. Residues 457–477 traverse the membrane as a helical segment; that stretch reads GVFLFFAGWLVIMVLCAIFLL. At 478–534 the chain is on the cytoplasmic side; sequence PETKGVPIERVQALYARHWFWNRVMGPAAAEVIAEDEKRVAAASAIIKEEELSKAMK.

This sequence belongs to the major facilitator superfamily. Sugar transporter (TC 2.A.1.1) family.

It is found in the membrane. In terms of biological role, active uptake of hexoses. In Parachlorella kessleri (Green alga), this protein is H(+)/hexose cotransporter 1 (HUP1).